A 492-amino-acid chain; its full sequence is Falcipain-3 (492 aa).

At 1–35 (MEYHMEYSPNEVIKQEREVFVGKEKSGSKFKRKRS) the chain is on the cytoplasmic side. A propeptide spans 1 to 242 (MEYHMEYSPN…LNLKTHGPFK (242 aa)) (activation peptide). Residues 16–25 (EREVFVGKEK) carry the Bipartite vacuolar targeting signal 1 motif. Residues 36–56 (IFIVLTVSICFMFALMLFYFT) form a helical; Signal-anchor for type II membrane protein membrane-spanning segment. Topologically, residues 57 to 492 (RNENNKTLFT…GTEAYVPLLE (436 aa)) are lumenal. Residue Asn-61 is glycosylated (N-linked (GlcNAc...) asparagine). The Bipartite vacuolar targeting signal 2 signature appears at 84–105 (KSESGKKFIVSKLEELISSYDK). Asn-129 carries N-linked (GlcNAc...) asparagine glycosylation. Positions 251–268 (EANYEDVIKKYKPADAKL) match the Nose motif; required for the correct folding of the mature form motif. Cystine bridges form between Cys-290/Cys-331, Cys-324/Cys-365, Cys-350/Cys-370, and Cys-419/Cys-480. Cys-293 is a catalytic residue. The active site involves His-425. Residues 436–445 (DIYNEDTGRM) carry the Arm motif; binds to host hemoglobin and required for the inhibitory interaction between the propeptide and the catalytic domain motif. The active site involves Asn-455.

It belongs to the peptidase C1 family. In terms of processing, auto-cleavage occurs at acidic pH. The proenzyme is the predominant form in late trophozoites and both the pro and mature enzyme are present in schizonts.

It is found in the membrane. The protein localises to the vacuole. The protein resides in the cytoplasmic vesicle membrane. Its activity is regulated as follows. Inhibited by cysteine protease inhibitor ICP. Cysteine protease which cleaves native host hemoglobin and globin in the food vacuole during the asexual blood stage. Preferentially cleaves substrates which have an arginine at the P1 position and a leucine at the P2 position. The protein is Falcipain-3 of Plasmodium falciparum (isolate 3D7).